Here is a 273-residue protein sequence, read N- to C-terminus: Phosphate import ATP-binding protein PstB (273 aa).

Positions 19–258 constitute an ABC transporter domain; it reads LSLQNVTISY…FNDTDKIFNA (240 aa). 51 to 58 lines the ATP pocket; sequence GPSGCGKS.

Belongs to the ABC transporter superfamily. Phosphate importer (TC 3.A.1.7) family. As to quaternary structure, the complex is composed of two ATP-binding proteins (PstB), two transmembrane proteins (PstC and PstA) and a solute-binding protein (PstS).

It is found in the cell inner membrane. The catalysed reaction is phosphate(out) + ATP + H2O = ADP + 2 phosphate(in) + H(+). In terms of biological role, part of the ABC transporter complex PstSACB involved in phosphate import. Responsible for energy coupling to the transport system. The sequence is that of Phosphate import ATP-binding protein PstB from Synechococcus sp. (strain CC9605).